The primary structure comprises 243 residues: Adenylate dimethylallyltransferase (243 aa).

The enzyme catalyses dimethylallyl diphosphate + AMP = N(6)-(dimethylallyl)adenosine 5'-phosphate + diphosphate. Transfers dimethylallyl groups to AMP as part of the biosynthesis of cytokinin phytohormones. This chain is Adenylate dimethylallyltransferase (tzs), found in Agrobacterium tumefaciens (strain T37).